A 338-amino-acid chain; its full sequence is Nicotinate-nucleotide--dimethylbenzimidazole phosphoribosyltransferase (338 aa).

The active-site Proton acceptor is E306.

It belongs to the CobT family.

It carries out the reaction 5,6-dimethylbenzimidazole + nicotinate beta-D-ribonucleotide = alpha-ribazole 5'-phosphate + nicotinate + H(+). The protein operates within nucleoside biosynthesis; alpha-ribazole biosynthesis; alpha-ribazole from 5,6-dimethylbenzimidazole: step 1/2. In terms of biological role, catalyzes the synthesis of alpha-ribazole-5'-phosphate from nicotinate mononucleotide (NAMN) and 5,6-dimethylbenzimidazole (DMB). The protein is Nicotinate-nucleotide--dimethylbenzimidazole phosphoribosyltransferase of Cereibacter sphaeroides (strain ATCC 17023 / DSM 158 / JCM 6121 / CCUG 31486 / LMG 2827 / NBRC 12203 / NCIMB 8253 / ATH 2.4.1.) (Rhodobacter sphaeroides).